A 482-amino-acid polypeptide reads, in one-letter code: MTGISLPPELQRVHMVGIGGAGMSGVARILLDRGGLVSGSDAKESRGVVALRARGAEIRIGHDASSLDLLPGGPTAVVTTHAAIPKTNPELVEARKRGIPVILRPVVLAKLMTGYTTLMVTGTHGKTTTTSMLIVALQHSGFDPSFAVGGELGEAGTNAHHGSGTTFVAEADESDGSLLEYTPNVAVVTNIEADHLDFFGSEQAYTAVFDSFVERIAPGGALVVCTDDPGAAALADRTDALGIRVLRYGSTGDNLAGTLLSWEQQGTGAVAHIRLAGEHNPRAVRLSVPGRHMALNALAALLAAREIGAPTDSVLDGLAGFEGVRRRFELVGTAAGARVFDDYAHHPTEVRATLEAARTVVDQNGGRVVVAFQPHLYSRTATFAHEFGAALSVADQVVVLDVYAAREQPMAGVSGATVADHVTAPVTYVPDFSAVAAHVASIARSGDVILTMGAGDVTMLGGEILSELRLKDNRGMPGAGAS.

122–128 serves as a coordination point for ATP; it reads GTHGKTT.

This sequence belongs to the MurCDEF family.

The protein resides in the cytoplasm. It catalyses the reaction UDP-N-acetyl-alpha-D-muramate + L-alanine + ATP = UDP-N-acetyl-alpha-D-muramoyl-L-alanine + ADP + phosphate + H(+). It participates in cell wall biogenesis; peptidoglycan biosynthesis. Cell wall formation. The protein is UDP-N-acetylmuramate--L-alanine ligase of Mycolicibacterium smegmatis (strain ATCC 700084 / mc(2)155) (Mycobacterium smegmatis).